Here is a 349-residue protein sequence, read N- to C-terminus: MLFKISFLALIASALAMSINSPTNGDTWQTNGEEQITWNVVSTDEPSAALYLTNFAVYPTVTQYLDTVDTSTGSYTTNTTNWPTGQGFQINMAYPGRPEQIYAQSQQFNIVEGAASSSSSSSSSSSSLVSSTTSSSSSATPSTTSSSSSSSSSSSSSSSKSSSSSSKSSSRSSSRTTSHRTTSHKSSSYRPTVFPYTTISHYNITNATNGTYCNGTNGTNFTCIVNASNATNSTFWLNGTNSTNGTNSTNSTSTTSHSLTKLPTSSKSLTTSKTTASGHITKGVMEALSTNDTTNTTDDATNTTSDSSSSSSASASSSSSSSSAASLVSQPVGISAVIAFFAVALSLTL.

The signal sequence occupies residues Met1–Ala16. The Lumenal portion of the chain corresponds to Met17–Ser326. 2 disordered regions span residues Ala115–Arg190 and Thr243–Ser322. 3 stretches are compositionally biased toward low complexity: residues Ser116–Thr176, Thr243–Gly278, and Ser289–Ser322. Residues Leu327–Leu347 traverse the membrane as a helical segment. Topologically, residues Thr348–Leu349 are cytoplasmic.

The protein localises to the endoplasmic reticulum membrane. This is an uncharacterized protein from Schizosaccharomyces pombe (strain 972 / ATCC 24843) (Fission yeast).